A 361-amino-acid polypeptide reads, in one-letter code: Phospho-N-acetylmuramoyl-pentapeptide-transferase (361 aa).

Transmembrane regions (helical) follow at residues 28 to 48 (LAAL…IRSL), 73 to 93 (TMGG…WADL), 97 to 117 (YIWL…VDDY), 134 to 154 (FFWQ…TAEL), 168 to 188 (VAIP…IVGS), 200 to 220 (GLAI…AYVA), 237 to 257 (AGEL…FLWF), 264 to 284 (VFMG…ITVI), 289 to 309 (IVLV…MIQV), and 338 to 358 (QVVV…LSTL).

The protein belongs to the glycosyltransferase 4 family. MraY subfamily. Mg(2+) serves as cofactor.

It localises to the cell inner membrane. The enzyme catalyses UDP-N-acetyl-alpha-D-muramoyl-L-alanyl-gamma-D-glutamyl-meso-2,6-diaminopimeloyl-D-alanyl-D-alanine + di-trans,octa-cis-undecaprenyl phosphate = di-trans,octa-cis-undecaprenyl diphospho-N-acetyl-alpha-D-muramoyl-L-alanyl-D-glutamyl-meso-2,6-diaminopimeloyl-D-alanyl-D-alanine + UMP. It participates in cell wall biogenesis; peptidoglycan biosynthesis. In terms of biological role, catalyzes the initial step of the lipid cycle reactions in the biosynthesis of the cell wall peptidoglycan: transfers peptidoglycan precursor phospho-MurNAc-pentapeptide from UDP-MurNAc-pentapeptide onto the lipid carrier undecaprenyl phosphate, yielding undecaprenyl-pyrophosphoryl-MurNAc-pentapeptide, known as lipid I. In Nitrosomonas eutropha (strain DSM 101675 / C91 / Nm57), this protein is Phospho-N-acetylmuramoyl-pentapeptide-transferase.